The sequence spans 345 residues: Cytoplasmic envelopment protein 2 (345 aa).

Positions 26–35 are nuclear localization signal 1; the sequence is KLVGKSRKHR. A nuclear export signal region spans residues 55–63; that stretch reads CILCQLLLL. Residues 90-94 are nuclear localization signal 2; it reads RRRRR.

The protein belongs to the herpesviridae cytoplasmic envelopment protein 2 family. Interacts with cytoplasmic envelopment protein 3 and with the capsid. Interacts with host STING1; this interaction prevents viral DNA-triggered antiviral immune response.

Its subcellular location is the virion tegument. The protein resides in the host cytoplasm. The protein localises to the host nucleus. Plays a critical role in cytoplasmic virus egress. Participates in the final step of tegumentation and envelope acquisition within the host cytoplasm by directly interacting with the capsid. Upon virion binding to target cell, a signaling cascade is triggered to disrupt the interaction with the capsid, thereby preparing capsid uncoating. Additionally, antagonizes the viral DNA-triggered antiviral immune response by targeting host STING1 and preventing its dimerization and trafficking. This Human cytomegalovirus (strain AD169) (HHV-5) protein is Cytoplasmic envelopment protein 2 (UL94).